Consider the following 4485-residue polypeptide: Dynein gamma chain, flagellar outer arm (4485 aa).

Residues 1 to 1780 (MALDNRHRLI…IISICDVDFE (1780 aa)) form a stem region. Coiled coils occupy residues 449-469 (IEGL…VKRK), 804-838 (VEQN…VRNY), 1093-1114 (VRNV…DNLI), 1275-1297 (DVVE…SKKL), and 1699-1727 (KKVD…NLET). 4 AAA regions span residues 1781 to 2002 (YSFE…VLRT), 2061 to 2279 (KDAE…ISLK), 2384 to 2638 (TYPK…VFQG), and 2763 to 3013 (KFNE…YRRY). ATP contacts are provided by residues 1819–1826 (GPAGTGKT), 2099–2106 (GPSGSGKS), 2425–2432 (GGPGTAKT), and 2802–2809 (GVGGSGKQ). Coiled coils occupy residues 3077–3099 (AKEA…KEKQ), 3196–3227 (EAQK…ELLE), 3265–3343 (KVVE…LAGE), and 3569–3663 (EDQL…EEYR). The interval 3077–3343 (AKEAEALLKQ…NALIGALAGE (267 aa)) is stalk. AAA stretches follow at residues 3412-3643 (LVDD…DVSE) and 3857-4071 (AADY…FLQN).

Belongs to the dynein heavy chain family. In terms of assembly, consists of at least 3 heavy chains (alpha, beta and gamma), 2 intermediate chains and 8 light chains.

The protein resides in the cell projection. Its subcellular location is the cilium. It is found in the flagellum. It localises to the cytoplasm. The protein localises to the cytoskeleton. The protein resides in the flagellum axoneme. Force generating protein of eukaryotic cilia and flagella. Produces force towards the minus ends of microtubules. Dynein has ATPase activity; the force-producing power stroke is thought to occur on release of ADP. The sequence is that of Dynein gamma chain, flagellar outer arm (ODA2) from Chlamydomonas reinhardtii (Chlamydomonas smithii).